The primary structure comprises 633 residues: Threonine--tRNA ligase (633 aa).

Positions 1–59 (MIRITFSAEQKVKEYSGKVTGFDILQPDVLKEAIAFKVNGELHDLSREIEADAEIEVIQ) constitute a TGS domain. A catalytic region spans residues 240–532 (DHRKIAKDMD…LIENYAGKFP (293 aa)). Cysteine 332, histidine 383, and histidine 509 together coordinate Zn(2+).

This sequence belongs to the class-II aminoacyl-tRNA synthetase family. As to quaternary structure, homodimer. Zn(2+) serves as cofactor.

Its subcellular location is the cytoplasm. The enzyme catalyses tRNA(Thr) + L-threonine + ATP = L-threonyl-tRNA(Thr) + AMP + diphosphate + H(+). Functionally, catalyzes the attachment of threonine to tRNA(Thr) in a two-step reaction: L-threonine is first activated by ATP to form Thr-AMP and then transferred to the acceptor end of tRNA(Thr). Also edits incorrectly charged L-seryl-tRNA(Thr). The protein is Threonine--tRNA ligase of Wolbachia sp. subsp. Drosophila simulans (strain wRi).